Consider the following 84-residue polypeptide: Anthracycline acyl carrier protein DauA (84 aa).

Residues Glu3–Leu80 form the Carrier domain. O-(pantetheine 4'-phosphoryl)serine is present on Ser40.

It participates in antibiotic biosynthesis; daunorubicin biosynthesis. The protein operates within antibiotic biosynthesis; carminomycin biosynthesis. Its pathway is antibiotic biosynthesis; rhodomycin biosynthesis. It functions in the pathway antibiotic biosynthesis; aclacinomycin biosynthesis. Its function is as follows. Involved in the biosynthesis of aklanonate which is an important precursor common to the formation of the clinically significant anthracyclines such as carminomycin, daunorubicin (daunomycin), rhodomycin, aclacinomycin T (aklavin) and aclacinomycin A (aclarubicin). These compounds are aromatic polyketide antibiotics that exhibit high cytotoxicity and are widely applied in the chemotherapy of a variety of cancers. The polypeptide is Anthracycline acyl carrier protein DauA (dauA) (Streptomyces sp. (strain C5)).